The primary structure comprises 183 residues: Putative calmodulin-like protein 2 (183 aa).

4 EF-hand domains span residues Glu-7–Ser-42, Pro-43–Asp-78, Gly-80–Pro-115, and Leu-116–Gln-151. Ca(2+)-binding residues include Asp-20, Asp-22, Asp-24, Thr-26, Glu-31, Asp-56, Asp-58, Ser-60, Ser-62, Glu-67, Asp-93, Asp-95, Asn-97, Glu-104, Asp-129, Asp-131, Asp-133, Gln-135, and Glu-140. The disordered stretch occupies residues Met-154 to Leu-183. 2 S-palmitoyl cysteine lipidation sites follow: Cys-173 and Cys-174. Residue Cys-180 is modified to Cysteine methyl ester. A lipid anchor (S-farnesyl cysteine) is attached at Cys-180. The propeptide at Thr-181 to Leu-183 is removed in mature form.

Belongs to the calmodulin family.

It localises to the membrane. In terms of biological role, potential calcium sensor. This Oryza sativa subsp. japonica (Rice) protein is Putative calmodulin-like protein 2 (CML2).